Here is a 154-residue protein sequence, read N- to C-terminus: Protein X (154 aa).

A mitochondrial targeting sequence region spans residues 68-117; sequence PCALRFTSARRMETTVNAHQVLPKVLYKRTLGLSAMSTTDLEAYFKDCLF.

The protein belongs to the orthohepadnavirus protein X family. May form homodimer. May interact with host CEBPA, CFLAR, CREB1, DDB1, E4F1, HBXIP, HSPD1/HSP60, NFKBIA, POLR2E and SMAD4. Interacts with host SMC5-SMC6 complex and induces its degradation. Interacts with host TRPC4AP; leading to prevent ubiquitination of TRPC4AP. Interacts with host PLSCR1; this interaction promotes ubiquitination and degradation of HBx and impairs HBx-mediated cell proliferation. In terms of processing, a fraction may be phosphorylated in insect cells and HepG2 cells, a human hepatoblastoma cell line. Phosphorylated in vitro by host protein kinase C or mitogen-activated protein kinase. N-acetylated in insect cells.

The protein resides in the host cytoplasm. The protein localises to the host nucleus. It is found in the host mitochondrion. Its function is as follows. Multifunctional protein that plays a role in silencing host antiviral defenses and promoting viral transcription. Does not seem to be essential for HBV infection. May be directly involved in development of cirrhosis and liver cancer (hepatocellular carcinoma). Most of cytosolic activities involve modulation of cytosolic calcium. The effect on apoptosis is controversial depending on the cell types in which the studies have been conducted. May induce apoptosis by localizing in mitochondria and causing loss of mitochondrial membrane potential. May also modulate apoptosis by binding host CFLAR, a key regulator of the death-inducing signaling complex (DISC). Promotes viral transcription by using the host E3 ubiquitin ligase DDB1 to target the SMC5-SMC6 complex to proteasomal degradation. This host complex would otherwise bind to viral episomal DNA, and prevents its transcription. Moderately stimulates transcription of many different viral and cellular transcription elements. Promoters and enhancers stimulated by HBx contain DNA binding sites for NF-kappa-B, AP-1, AP-2, c-EBP, ATF/CREB, or the calcium-activated factor NF-AT. The sequence is that of Protein X from Homo sapiens (Human).